Reading from the N-terminus, the 130-residue chain is MIRPIKKITLRKTKKKSPKGVIHIQASFNNTIVTITDLRGQVISWSSSGACGFKGAKKSTAYAAQIATENAIKQWTDQNTKQAEVMMSGPGPGRETALRAIRNSRVILSFIRDVTPIPHNGCRPPKKRRV.

This sequence belongs to the universal ribosomal protein uS11 family. In terms of assembly, part of the 30S ribosomal subunit.

The protein localises to the plastid. It is found in the chloroplast. This is Small ribosomal subunit protein uS11c from Chara vulgaris (Common stonewort).